The sequence spans 248 residues: Protein PARTING DANCERS homolog (248 aa).

Positions 1–10 (MERSTHSTGW) are enriched in polar residues. A disordered region spans residues 1-25 (MERSTHSTGWTCLPPPPPEPAAPGR).

The protein belongs to the ERCC1/RAD10/SWI10 family. As to quaternary structure, interacts with SHOC1 (via C-terminus). Interacts with HEI10. As to expression, highly expressed in anthers and pistil during meiosis. Expressed in pollen mother cells (PMCs) during meiosis. Expressed at low levels in roots, shoots, leaves, flowers, and glumes.

The protein resides in the chromosome. Its subcellular location is the nucleus. The protein localises to the cytoplasm. It localises to the cell membrane. Functionally, essential for normal crossover (CO) formation during meiosis. Essential component for the formation of class I meiotic COs. Interacts with SHOC1, another meiotic component, to regulate CO formation, possibly by stabilizing the recombination intermediates during meiosis. PTD and SHOC1 may form transient heterotrimeric or heterotetrameric complexes with HEI10 and/or ZIP4 to promote class I COs formation. Does not seem to be involved in early meiotic recombination steps involving double-strand break (DSB) formation, processing, and single-strand invasion. Does not seem to be involved in homologous pairing or synaptonemal complex (SC) assembly. The chain is Protein PARTING DANCERS homolog from Oryza sativa subsp. japonica (Rice).